We begin with the raw amino-acid sequence, 486 residues long: MEEWVEKYRPKSLNDVAGHNKTKQALIEWIESIIGGQNQKPILLAGPPGSGKTTLAYAIANDYAFDVIELNASDKRNKDVISQVVGTAATSKSLTGRRTLIVLDEVDGLSGNDDRGGVAEIIKVLKTAENPVILTANDVYKPALMTLRNSVNLINVGSVHTNSIPPVLRRIALKEGFEIDEKIIKMIASHSGGDLRAAINDLQSLATGGSIEIEDAKELPDRDSEKSIFDAMRIIMKTTHYDIATSATRDVKEDIGTIEEWISENLPKEYLKYKDLAEGYDYLSKSDVFLGRVYRRQYFGLWRYASALMTAGTALAKEEKYRGFTRYGPPAIFTKLSRTKGSRQKMKDILKKIALKTHTSTKRARNTVDYLTVIFESNAEVSAELVEYYELTKDEIEFLTNKTITKKILSVIAGKKPKVKKETPKKTEKPKEVMPIIPKRPRISEPPKEPLKEVIEETLEKSVEKADTKEEKKKDPKKQATLDSFF.

46–53 is an ATP binding site; the sequence is GPPGSGKT. Residues 419 to 486 are disordered; sequence VKKETPKKTE…KKQATLDSFF (68 aa). Basic and acidic residues-rich tracts occupy residues 420-432 and 442-480; these read KKET…KPKE and RISE…KKQA.

Belongs to the activator 1 small subunits family. RfcL subfamily. As to quaternary structure, heteromultimer composed of small subunits (RfcS) and large subunits (RfcL).

Its function is as follows. Part of the RFC clamp loader complex which loads the PCNA sliding clamp onto DNA. This chain is Replication factor C large subunit, found in Methanococcus maripaludis (strain DSM 14266 / JCM 13030 / NBRC 101832 / S2 / LL).